The sequence spans 195 residues: Probable GTP-binding protein EngB (195 aa).

Positions 24–195 (GLKEVALAGR…MIFNAIEKYL (172 aa)) constitute an EngB-type G domain. GTP is bound by residues 32 to 39 (GRSNVGKS), 59 to 63 (GKTQT), 77 to 80 (DVPG), 144 to 147 (TKED), and 176 to 178 (YTA). Serine 39 and threonine 61 together coordinate Mg(2+).

Belongs to the TRAFAC class TrmE-Era-EngA-EngB-Septin-like GTPase superfamily. EngB GTPase family. Mg(2+) is required as a cofactor.

Functionally, necessary for normal cell division and for the maintenance of normal septation. This Macrococcus caseolyticus (strain JCSC5402) (Macrococcoides caseolyticum) protein is Probable GTP-binding protein EngB.